A 347-amino-acid polypeptide reads, in one-letter code: MKKVFISGGGTGGHFYPALSVAENLKEKGFSITYIGTTNGIENKKDFPADEKILYPMRAVRGKSIVGKIQGVFSLLSTTFKVYKQIKKEKPDFSICFGGYTSIPLGLASFLARVPLYIHEQNSIPSYSNKILSYFAKKVFITFELTAKYFDRKKTVLTGMPLRKNIIERAKNYVYKPNQTKTVLVVGGSQGAKKLSESIISLASEMKDIKFILIKGKWQVEVPNLENLTVYEYVDNMEDLYTSADVVISRSGSSSVNEILCFGKYAIFVPFPYAASNHQYYNVKWLKDLGLCELIEEKDLSKEVLKKALEDAFNKDLESLSKKIKEYAIFDSDEKIVENILNDFKND.

Residues 11–13, N122, R163, S189, and Q279 contribute to the UDP-N-acetyl-alpha-D-glucosamine site; that span reads TGG.

This sequence belongs to the glycosyltransferase 28 family. MurG subfamily.

The protein localises to the cell inner membrane. The catalysed reaction is di-trans,octa-cis-undecaprenyl diphospho-N-acetyl-alpha-D-muramoyl-L-alanyl-D-glutamyl-meso-2,6-diaminopimeloyl-D-alanyl-D-alanine + UDP-N-acetyl-alpha-D-glucosamine = di-trans,octa-cis-undecaprenyl diphospho-[N-acetyl-alpha-D-glucosaminyl-(1-&gt;4)]-N-acetyl-alpha-D-muramoyl-L-alanyl-D-glutamyl-meso-2,6-diaminopimeloyl-D-alanyl-D-alanine + UDP + H(+). It participates in cell wall biogenesis; peptidoglycan biosynthesis. Functionally, cell wall formation. Catalyzes the transfer of a GlcNAc subunit on undecaprenyl-pyrophosphoryl-MurNAc-pentapeptide (lipid intermediate I) to form undecaprenyl-pyrophosphoryl-MurNAc-(pentapeptide)GlcNAc (lipid intermediate II). The chain is UDP-N-acetylglucosamine--N-acetylmuramyl-(pentapeptide) pyrophosphoryl-undecaprenol N-acetylglucosamine transferase from Sulfurihydrogenibium sp. (strain YO3AOP1).